Consider the following 4753-residue polypeptide: Dynein heavy chain domain-containing protein 1 (4753 aa).

Coiled-coil stretches lie at residues 826 to 858 and 936 to 991; these read IHAI…ALHE and KLQQ…LSEL. The tract at residues 2688–2766 is disordered; that stretch reads HLGKDHQESE…SRGMKESISH (79 aa). Residues 2695–2712 show a composition bias toward acidic residues; sequence ESEEEEEEERVPEVESEG. Polar residues predominate over residues 2740 to 2751; that stretch reads RVSNSRDPSLTP. 3 coiled-coil regions span residues 3125–3227, 3590–3651, and 4431–4460; these read LQQQ…MSKA, MRNQ…QGSK, and GAQL…LTHV. Residues 3580 to 3657 are disordered; that stretch reads ALTEGRGKGL…QGSKPAYETQ (78 aa). Acidic residues predominate over residues 3602–3615; sequence KEEDDESEESNEAE. The segment covering 3616-3631 has biased composition (basic and acidic residues); it reads DQTKEQKAEERKNEQE. The span at 3632–3641 shows a compositional bias: acidic residues; that stretch reads KEQEENEEKE. Residues 4669 to 4697 are disordered; that stretch reads ALQDSPSSQPSPLPPVSISTQAPGTSDLP.

It belongs to the dynein heavy chain family. In terms of tissue distribution, expressed in spermatozoa (at protein level).

It is found in the cell projection. The protein localises to the cilium. It localises to the flagellum. Its function is as follows. Essential for the normal assembly and function of sperm flagella axonemes. The chain is Dynein heavy chain domain-containing protein 1 (DNHD1) from Homo sapiens (Human).